We begin with the raw amino-acid sequence, 66 residues long: MKAGIHPNYKKVMVKCACGNEFESGSVKDEVRVEICSACHPFYTGRQKFASAAGRVDKFNKKYGLK.

4 residues coordinate Zn(2+): cysteine 16, cysteine 18, cysteine 36, and cysteine 39.

This sequence belongs to the bacterial ribosomal protein bL31 family. Type A subfamily. In terms of assembly, part of the 50S ribosomal subunit. It depends on Zn(2+) as a cofactor.

Functionally, binds the 23S rRNA. The polypeptide is Large ribosomal subunit protein bL31 (Anoxybacillus flavithermus (strain DSM 21510 / WK1)).